Reading from the N-terminus, the 275-residue chain is Penicillin-insensitive murein endopeptidase (275 aa).

A signal peptide spans 1–19 (MKKWIAGLLALIAISPVMA). 3 disulfide bridges follow: Cys44–Cys264, Cys187–Cys235, and Cys216–Cys223. Residues His110, His113, Asp120, Asp147, and His211 each contribute to the Zn(2+) site. The tract at residues 234–262 (GCGAELESWFQPHQPSAKPGKTLPPPLPP) is disordered.

Belongs to the peptidase M74 family. Dimer. Zn(2+) is required as a cofactor.

It is found in the periplasm. Functionally, murein endopeptidase that cleaves the D-alanyl-meso-2,6-diamino-pimelyl amide bond that connects peptidoglycan strands. Likely plays a role in the removal of murein from the sacculus. The polypeptide is Penicillin-insensitive murein endopeptidase (Yersinia enterocolitica serotype O:8 / biotype 1B (strain NCTC 13174 / 8081)).